The primary structure comprises 1083 residues: MDDVQIDDTFPVDLNGVTSLCSPEIPSFDFVSDETEKLEIGDTSIDDCDDALGDSMVCDPNSRLVPTGLTRTNRTDETIMFINAGGDDSKVLDSELNISRDDYFEGGDVLRTEESIVEAGDFPFIYQSARVGNFCYQLNNLLPGEYLIDFHFAEIINTNGPKGIRVFNVYVQDEKATEFDIFSVVGANRPLLLVDLRVMVMDDGLIRVRFEGINGSPVVCGICLRKAPQVSVPRTSQDFIKCENCATEIEISPTRKRLMRAKAHDKYEKKIAELSERYEHKTNECHEAWMSLTSANEQLEKVMMELNNKIYQARSLDQTVITQADCLKSITRKYENDKRHWATAIDSLQEKIEIMKREQSQLSQEAHECVEGIPELYKMVGGVQALVSQCEDLKQKYSEEQAKRKELYNHIQETKGNIRVFCRCRPLNTEETSTKSATIVDFDGAKDGELGVITGNNSKKSFKFDRVYTPKDGQVDVFADASPMVVSVLDGYNVCIFAYGQTGTGKTFTMEGTPQNRGVNYRTVEQLFEVARERRETISYNISVSVLEVYNEQIRDLLATSPGSKKLEIKQSSDGSHHVPGLVEANVENINEVWNVLQAGSNARSVGSNNVNEHSSRSHCMLSIMVKAKNLMNGDCTKSKLWLVDLAGSERLAKTDVQGERLKEAQNINRSLSALGDVIYALATKSSHIPYRNSKLTHLLQDSLGGDSKTLMFVQISPSEHDVSETLSSLNFATRVRGVELGPARKQVDTGEIQKLKAMVEKARQESRSKDESIKKMEENIQNLEGKNKGRDNSYRSLQEKNKDLQNQLDSVHNQSEKQYAQLQERLKSRDEICSNLQQKVKELECKLRERHQSDSAANNQKVKDLENNLKESEGSSLVWQQKVKDYENKLKESEGNSLVWQQKIKELEIKHKDEQSQEAVLLRQKIKELEMRLKEQEKHIQEMATTREFPEVANATPNEVKTCFKEDNFGNENMESNTNILRTSNRLKTKRHDSLNLNEMTRKKRASRSGETENNGDDPQMKEKRIRKSDPPKVFSRVVRPTRTASGSSSQVPVAQKRVIKREQQEVPVVKERDSKKKIWSR.

The stretch at 264-418 forms a coiled coil; sequence HDKYEKKIAE…NHIQETKGNI (155 aa). The region spanning 417-739 is the Kinesin motor domain; the sequence is NIRVFCRCRP…LNFATRVRGV (323 aa). 500-507 contacts ATP; it reads GQTGTGKT. Coiled coils occupy residues 746 to 876 and 905 to 947; these read KQVD…SEGS and IKEL…MATT. Positions 967-1083 are disordered; the sequence is EDNFGNENME…RDSKKKIWSR (117 aa). Over residues 971-985 the composition is skewed to polar residues; it reads GNENMESNTNILRTS. Positions 1020–1032 are enriched in basic and acidic residues; that stretch reads PQMKEKRIRKSDP. Residues 1044–1054 show a composition bias toward polar residues; it reads RTASGSSSQVP. The segment covering 1062 to 1083 has biased composition (basic and acidic residues); the sequence is KREQQEVPVVKERDSKKKIWSR.

This sequence belongs to the TRAFAC class myosin-kinesin ATPase superfamily. Kinesin family. KIN-14 subfamily.

The sequence is that of Kinesin-like protein KIN-14R from Arabidopsis thaliana (Mouse-ear cress).